The primary structure comprises 467 residues: 3-isopropylmalate dehydratase large subunit (467 aa).

[4Fe-4S] cluster-binding residues include Cys347, Cys408, and Cys411.

Belongs to the aconitase/IPM isomerase family. LeuC type 1 subfamily. Heterodimer of LeuC and LeuD. [4Fe-4S] cluster is required as a cofactor.

It catalyses the reaction (2R,3S)-3-isopropylmalate = (2S)-2-isopropylmalate. It functions in the pathway amino-acid biosynthesis; L-leucine biosynthesis; L-leucine from 3-methyl-2-oxobutanoate: step 2/4. Its function is as follows. Catalyzes the isomerization between 2-isopropylmalate and 3-isopropylmalate, via the formation of 2-isopropylmaleate. In Bordetella bronchiseptica (strain ATCC BAA-588 / NCTC 13252 / RB50) (Alcaligenes bronchisepticus), this protein is 3-isopropylmalate dehydratase large subunit.